The sequence spans 247 residues: Carboxy-S-adenosyl-L-methionine synthase (247 aa).

S-adenosyl-L-methionine contacts are provided by residues Tyr39, 64 to 66, 89 to 90, 117 to 118, Asn132, and Arg199; these read GCS, DN, and DI.

This sequence belongs to the class I-like SAM-binding methyltransferase superfamily. Cx-SAM synthase family. As to quaternary structure, homodimer.

It carries out the reaction prephenate + S-adenosyl-L-methionine = carboxy-S-adenosyl-L-methionine + 3-phenylpyruvate + H2O. Its function is as follows. Catalyzes the conversion of S-adenosyl-L-methionine (SAM) to carboxy-S-adenosyl-L-methionine (Cx-SAM). This Klebsiella pneumoniae subsp. pneumoniae (strain ATCC 700721 / MGH 78578) protein is Carboxy-S-adenosyl-L-methionine synthase.